Consider the following 90-residue polypeptide: Small ribosomal subunit protein bS20 (90 aa).

Residues Met-1–Ile-11 are compositionally biased toward basic and acidic residues. The tract at residues Met-1–Arg-29 is disordered.

Belongs to the bacterial ribosomal protein bS20 family.

In terms of biological role, binds directly to 16S ribosomal RNA. The sequence is that of Small ribosomal subunit protein bS20 from Leptospira borgpetersenii serovar Hardjo-bovis (strain JB197).